The sequence spans 119 residues: Large ribosomal subunit protein uL18 (119 aa).

This sequence belongs to the universal ribosomal protein uL18 family. In terms of assembly, part of the 50S ribosomal subunit; part of the 5S rRNA/L5/L18/L25 subcomplex. Contacts the 5S and 23S rRNAs.

In terms of biological role, this is one of the proteins that bind and probably mediate the attachment of the 5S RNA into the large ribosomal subunit, where it forms part of the central protuberance. The sequence is that of Large ribosomal subunit protein uL18 from Clostridium botulinum (strain 657 / Type Ba4).